The sequence spans 379 residues: Stimulator of interferon genes protein (379 aa).

2 helical membrane-spanning segments follow: residues 18–38 (AKKAAFVLLSVCLVVLWDLGE) and 43–63 (ILQWLMLHLASLQLGLLFKGV). 2 S-palmitoyl cysteine lipidation sites follow: Cys88 and Cys91. 2 helical membrane-spanning segments follow: residues 89–109 (LGCPIRCGTLLLLSCYFYTPF) and 114–134 (HLPFTWTLALLGLSQALSILL). Residues 153–340 (LNVAQGMAWS…RHLKQEEKEE (188 aa)) form a cyclic dinucleotide-binding domain (CBD) region. Residues Ser162, Tyr167, Arg238, and Thr263 each coordinate 2',3'-cGAMP. Residues Ser162, Tyr167, 238–241 (RVYT), and Thr263 each bind 3',3'-c-di-GMP. Tyr167, Arg238, and Thr263 together coordinate 2',3'-cUAMP. The segment at 338-363 (KEEVTVDSARTSVMPDPSMLPQGPEL) is disordered. A C-terminal tail (CTT) region spans residues 340-379 (EVTVDSARTSVMPDPSMLPQGPELLISSMDQPLPLRTDVF). Residue Ser355 is modified to Phosphoserine. The pLxIS motif motif lies at 363-366 (LLIS). The residue at position 366 (Ser366) is a Phosphoserine; by TBK1.

This sequence belongs to the STING family. Homodimer; forms a homodimer in absence of cyclic nucleotide (c-di-GMP or cGAMP). Homotetramer; in presence of cyclic nucleotide (c-di-GMP or cGAMP), forms tetramers and higher-order oligomers through side-by-side packing. Interacts (when phosphorylated) with IRF3; following activation and phosphorylation on the pLxIS motif by TBK1, recruits IRF3. Interacts with TBK1; when homodimer, leading to subsequent production of IFN-beta. Interacts (via transmembrane domain) with TMEM203. Phosphorylation by TBK1 leads to activation and production of IFN-beta. Following cyclic nucleotide (c-di-GMP or cGAMP)-binding, activation and translocation from the endoplasmic reticulum, STING1 is phosphorylated by TBK1 at Ser-366 in the pLxIS motif. The phosphorylated pLxIS motif constitutes an IRF3-binding motif, leading to recruitment of the transcription factor IRF3 to induce type-I interferons and other cytokines. In contrast, lacks phosphorylation site at position 358, leading to reduced production of type-I interferons and other cytokines.

The protein resides in the endoplasmic reticulum membrane. It localises to the cytoplasm. It is found in the perinuclear region. The protein localises to the endoplasmic reticulum-Golgi intermediate compartment membrane. Its subcellular location is the golgi apparatus membrane. The protein resides in the cytoplasmic vesicle. It localises to the autophagosome membrane. It is found in the mitochondrion outer membrane. The protein localises to the cell membrane. The catalysed reaction is H(+)(in) = H(+)(out). Its function is as follows. Facilitator of innate immune signaling that acts as a sensor of cytosolic DNA from bacteria and viruses and promotes low production of type I interferon (IFN-alpha and IFN-beta). Compared to other mammals, STING1-dependent type I interferon induction is strongly reduced in bats, suggesting that the cGAS-STING pathway promotes a limited inflammatory response. Innate immune response is triggered in response to non-CpG double-stranded DNA from viruses and bacteria delivered to the cytoplasm. Acts by binding cyclic dinucleotides: recognizes and binds cyclic di-GMP (c-di-GMP), a second messenger produced by bacteria, cyclic UMP-AMP (2',3'-cUAMP), and cyclic GMP-AMP (cGAMP), a messenger produced by CGAS in response to DNA virus in the cytosol. Upon binding to c-di-GMP, cUAMP or cGAMP, STING1 oligomerizes, translocates from the endoplasmic reticulum and is phosphorylated by TBK1 on the pLxIS motif, leading to recruitment and subsequent activation of the transcription factor IRF3 to induce expression of type I interferon and exert a potent anti-viral state. In addition to promote the production of type I interferons, plays a direct role in autophagy. Following cGAMP-binding, STING1 buds from the endoplasmic reticulum into COPII vesicles, which then form the endoplasmic reticulum-Golgi intermediate compartment (ERGIC). The ERGIC serves as the membrane source for WIPI2 recruitment and LC3 lipidation, leading to formation of autophagosomes that target cytosolic DNA or DNA viruses for degradation by the lysosome. Promotes autophagy by acting as a proton channel that directs proton efflux from the Golgi to facilitate MAP1LC3B/LC3B lipidation. The autophagy- and interferon-inducing activities can be uncoupled and autophagy induction is independent of TBK1 phosphorylation. This is Stimulator of interferon genes protein from Pteronotus parnellii (Parnell's mustached bat).